Here is a 420-residue protein sequence, read N- to C-terminus: Mannose-1-phosphate guanylyltransferase regulatory subunit alpha (420 aa).

The substrate-binding domain stretch occupies residues 2–251 (LKAVILIGGP…DGIWSQIKSA (250 aa)). GDP-alpha-D-mannose is bound by residues Glu-85 and Gln-247. A hexapeptide repeat domain region spans residues 273–420 (LAKHTPGGPR…SRSFTNQIIL (148 aa)). Residues 356–384 (TPNDPNPNDPRAHMDSESLFKDGKLLPAI) are C-loop.

The protein belongs to the transferase hexapeptide repeat family. As to quaternary structure, component of the GMPPA-GMPPB mannose-1-phosphate guanylyltransferase complex composed of 4 GMPPA subunits and 8 GMPPB subunits; the complex is organized into three layers, a central layer made up of 2 GMPPA dimers sandwiched between two layers each made up of 2 GMPPB dimers. In terms of tissue distribution, expressed in the liver (at protein level).

The protein localises to the cytoplasm. Functionally, regulatory subunit of the GMPPA-GMPPB mannose-1-phosphate guanylyltransferase complex; reduces the catalytic activity of GMPPB when part of the complex. Mediates allosteric feedback inhibition of GMPPB catalytic activity upon binding GDP-alpha-D-mannose. Together with GMPPB regulates GDP-alpha-D-mannose levels. The polypeptide is Mannose-1-phosphate guanylyltransferase regulatory subunit alpha (GMPPA) (Sus scrofa (Pig)).